Here is a 478-residue protein sequence, read N- to C-terminus: Alpha-1,3-mannosyl-glycoprotein 4-beta-N-acetylglucosaminyltransferase C (478 aa).

At 1 to 23 (MFKFHQVKHIFEILDKMRCLRKR) the chain is on the cytoplasmic side. The chain crosses the membrane as a helical; Signal-anchor for type II membrane protein span at residues 24–44 (FTVSFLGVLVIFLLFMNLYIE). Topologically, residues 45–478 (DSYVLEGDKQ…IIRSISIWTS (434 aa)) are lumenal. N-linked (GlcNAc...) asparagine glycans are attached at residues Asn84, Asn215, and Asn348.

This sequence belongs to the glycosyltransferase 54 family. A divalent metal cation is required as a cofactor.

It localises to the golgi apparatus membrane. The enzyme catalyses N(4)-{beta-D-GlcNAc-(1-&gt;2)-alpha-D-Man-(1-&gt;3)-[beta-D-GlcNAc-(1-&gt;2)-alpha-D-Man-(1-&gt;6)]-beta-D-Man-(1-&gt;4)-beta-D-GlcNAc-(1-&gt;4)-beta-D-GlcNAc}-L-asparaginyl-[protein] + UDP-N-acetyl-alpha-D-glucosamine = N(4)-{beta-D-GlcNAc-(1-&gt;2)-[beta-D-GlcNAc-(1-&gt;4)]-alpha-D-Man-(1-&gt;3)-[beta-D-GlcNAc-(1-&gt;2)-alpha-D-Man-(1-&gt;6)]-beta-D-Man-(1-&gt;4)-beta-D-GlcNAc-(1-&gt;4)-beta-D-GlcNAc}-L-asparaginyl-[protein] + UDP + H(+). It functions in the pathway protein modification; protein glycosylation. Its function is as follows. Glycosyltransferase that participates in the transfer of N-acetylglucosamine (GlcNAc) to the core mannose residues of N-linked glycans. Catalyzes the formation of the GlcNAcbeta1-4 branch on the GlcNAcbeta1-2Manalpha1-3 arm of the core structure of N-linked glycans. Essential for the production of tri- and tetra-antennary N-linked sugar chains. Does not catalyze the transfer of GlcNAc to the Manalpha1-6 arm to form GlcNAcBeta1-4Manalpha1-6 linkage ('GnT-VI' activity). The sequence is that of Alpha-1,3-mannosyl-glycoprotein 4-beta-N-acetylglucosaminyltransferase C (MGAT4C) from Sus scrofa (Pig).